The sequence spans 340 residues: Histidinol-phosphate aminotransferase (340 aa).

At lysine 204 the chain carries N6-(pyridoxal phosphate)lysine.

It belongs to the class-II pyridoxal-phosphate-dependent aminotransferase family. Histidinol-phosphate aminotransferase subfamily. Pyridoxal 5'-phosphate is required as a cofactor.

It catalyses the reaction L-histidinol phosphate + 2-oxoglutarate = 3-(imidazol-4-yl)-2-oxopropyl phosphate + L-glutamate. It participates in amino-acid biosynthesis; L-histidine biosynthesis; L-histidine from 5-phospho-alpha-D-ribose 1-diphosphate: step 7/9. This is Histidinol-phosphate aminotransferase from Thermococcus gammatolerans (strain DSM 15229 / JCM 11827 / EJ3).